Here is a 474-residue protein sequence, read N- to C-terminus: PRAME family member 8 (474 aa).

The stretch at 97 to 122 (QSKLQVLDLRNVDENFCDIFSGATAS) is one LRR 1; degenerate repeat. One copy of the LRR 2; degenerate repeat lies at 177-201 (HVCCKELQVFGMPIHSIIEVLNMVE). The stretch at 202–228 (LDCIQEVEVCCPWELSTLVKFAPYLGQ) is one LRR 3; degenerate repeat. Residues 229-264 (MRNLRKLVLFNIRASACIPPDNKGQFIARFTSQFLK) form an LRR 4; degenerate repeat. LRR repeat units lie at residues 265–290 (LDYF…LRCL), 291–322 (QASL…RQLK), 323–341 (ELDL…PLTG), 347–374 (VATL…VLSR), and 375–399 (CSQL…LLRH).

This sequence belongs to the PRAME family.

The sequence is that of PRAME family member 8 from Homo sapiens (Human).